The primary structure comprises 673 residues: UvrABC system protein B (673 aa).

The Helicase ATP-binding domain occupies 26–183 (ANFEAGLAKQ…RHLTDLQYTR (158 aa)). An ATP-binding site is contributed by 39-46 (GVTGSGKT). Positions 92-115 (YYDYYQPEAYVPSSDTFIEKDSSI) match the Beta-hairpin motif. In terms of domain architecture, Helicase C-terminal spans 431–597 (QVDDLMSEIH…SVERPISDIM (167 aa)). The segment at 601 to 631 (REDAAEKKSGKGRSKSRQVAEETPDYRAMKP) is disordered. The segment covering 618–630 (QVAEETPDYRAMK) has biased composition (basic and acidic residues). One can recognise a UVR domain in the interval 635–670 (AGKLKSLEQKMYQHAKDLEFEAAAQIRDQIQKLKTA).

Belongs to the UvrB family. As to quaternary structure, forms a heterotetramer with UvrA during the search for lesions. Interacts with UvrC in an incision complex.

It localises to the cytoplasm. Its function is as follows. The UvrABC repair system catalyzes the recognition and processing of DNA lesions. A damage recognition complex composed of 2 UvrA and 2 UvrB subunits scans DNA for abnormalities. Upon binding of the UvrA(2)B(2) complex to a putative damaged site, the DNA wraps around one UvrB monomer. DNA wrap is dependent on ATP binding by UvrB and probably causes local melting of the DNA helix, facilitating insertion of UvrB beta-hairpin between the DNA strands. Then UvrB probes one DNA strand for the presence of a lesion. If a lesion is found the UvrA subunits dissociate and the UvrB-DNA preincision complex is formed. This complex is subsequently bound by UvrC and the second UvrB is released. If no lesion is found, the DNA wraps around the other UvrB subunit that will check the other stand for damage. This is UvrABC system protein B from Xanthomonas oryzae pv. oryzae (strain PXO99A).